We begin with the raw amino-acid sequence, 259 residues long: Proteasome subunit alpha (259 aa).

It belongs to the peptidase T1A family. The 20S proteasome core is composed of 14 alpha and 14 beta subunits that assemble into four stacked heptameric rings, resulting in a barrel-shaped structure. The two inner rings, each composed of seven catalytic beta subunits, are sandwiched by two outer rings, each composed of seven alpha subunits. The catalytic chamber with the active sites is on the inside of the barrel. Has a gated structure, the ends of the cylinder being occluded by the N-termini of the alpha-subunits. Is capped at one or both ends by the proteasome regulatory ATPase, PAN.

It is found in the cytoplasm. Its activity is regulated as follows. The formation of the proteasomal ATPase PAN-20S proteasome complex, via the docking of the C-termini of PAN into the intersubunit pockets in the alpha-rings, triggers opening of the gate for substrate entry. Interconversion between the open-gate and close-gate conformations leads to a dynamic regulation of the 20S proteasome proteolysis activity. Its function is as follows. Component of the proteasome core, a large protease complex with broad specificity involved in protein degradation. The sequence is that of Proteasome subunit alpha from Methanococcus maripaludis (strain DSM 14266 / JCM 13030 / NBRC 101832 / S2 / LL).